A 446-amino-acid polypeptide reads, in one-letter code: Glutamyl-tRNA reductase (446 aa).

Residues 49-52 (TCNR), serine 109, 114-116 (ETQ), and glutamine 120 contribute to the substrate site. Cysteine 50 functions as the Nucleophile in the catalytic mechanism. 189-194 (GAGKMG) provides a ligand contact to NADP(+).

The protein belongs to the glutamyl-tRNA reductase family. In terms of assembly, homodimer.

It carries out the reaction (S)-4-amino-5-oxopentanoate + tRNA(Glu) + NADP(+) = L-glutamyl-tRNA(Glu) + NADPH + H(+). The protein operates within porphyrin-containing compound metabolism; protoporphyrin-IX biosynthesis; 5-aminolevulinate from L-glutamyl-tRNA(Glu): step 1/2. Its function is as follows. Catalyzes the NADPH-dependent reduction of glutamyl-tRNA(Glu) to glutamate 1-semialdehyde (GSA). The protein is Glutamyl-tRNA reductase of Priestia megaterium (Bacillus megaterium).